A 507-amino-acid polypeptide reads, in one-letter code: Acetylcholine receptor subunit beta-type lev-1 (507 aa).

A signal peptide spans 1–31 (MMLGGGGGCGAGGTWLGFLVFLAVSLRNHST). Asparagine 28, asparagine 58, and asparagine 109 each carry an N-linked (GlcNAc...) asparagine glycan. The Extracellular portion of the chain corresponds to 32–138 (CEDIDAEDRL…NNADGNYEVS (107 aa)). The helical transmembrane segment at 139–159 (FMCNVLILSTGTVLWVPPAIY) threads the bilayer. The cysteines at positions 163 and 177 are disulfide-linked. The next 3 membrane-spanning stretches (helical) occupy residues 243-263 (VVLI…FYLP), 271-291 (GLTM…SKIL), and 305-325 (LLLT…ICNI). Residues 373 to 392 (GPSVEENPMRSGEHHPLCRH) are disordered. The span at 379-392 (NPMRSGEHHPLCRH) shows a compositional bias: basic and acidic residues. A helical transmembrane segment spans residues 454-474 (FLLYGFFGATVGGTIGIIFTA).

The protein belongs to the ligand-gated ion channel (TC 1.A.9) family. Acetylcholine receptor (TC 1.A.9.1) subfamily. As to quaternary structure, interacts with unc-29. Component of nicotinic acetylcholine receptor composed of 2 non-alpha subunits lev-1 and unc-29, and 3 alpha subunits unc-38, unc-63 and lev-8.

It localises to the postsynaptic cell membrane. It is found in the cell membrane. Its function is as follows. Non-alpha subunit of nicotinic acetylcholine receptor (nAChR). Involved in nAChR sensitivity to nicotine. The polypeptide is Acetylcholine receptor subunit beta-type lev-1 (lev-1) (Caenorhabditis elegans).